The primary structure comprises 155 residues: Small ribosomal subunit protein uS7cz/uS7cy (155 aa).

It belongs to the universal ribosomal protein uS7 family. Part of the 30S ribosomal subunit.

The protein resides in the plastid. The protein localises to the chloroplast. In terms of biological role, one of the primary rRNA binding proteins, it binds directly to 16S rRNA where it nucleates assembly of the head domain of the 30S subunit. This is Small ribosomal subunit protein uS7cz/uS7cy (rps7-A) from Ceratophyllum demersum (Rigid hornwort).